We begin with the raw amino-acid sequence, 1058 residues long: Receptor-type guanylate cyclase gcy-22 (1058 aa).

Positions 1 to 23 (MSFISKCFICLLFSTYFLPPVNS) are cleaved as a signal peptide. Over 25-470 (VLQVGFLAAN…PKSFTDQYLA (446 aa)) the chain is Extracellular. Residues N36, N73, N201, N215, N277, N302, N324, N350, and N386 are each glycosylated (N-linked (GlcNAc...) asparagine). A helical membrane pass occupies residues 471–491 (IILGCTAAALVLIIAVISTIV). Over 492–1058 (FLVRSKRQEE…IEAKENGESI (567 aa)) the chain is Cytoplasmic. Residues 501–809 (EERLNQLWQV…SSNLMDHVFN (309 aa)) form the Protein kinase domain. Residues 811–840 (LEQYASNLEDEVQARMKELTEEKKRSDVLL) adopt a coiled-coil conformation. One can recognise a Guanylate cyclase domain in the interval 867 to 997 (TIFFSDVVSF…DSVNTASRME (131 aa)).

The protein belongs to the adenylyl cyclase class-4/guanylyl cyclase family. As to expression, expression in ASER neuron begins at an early larval stage and is maintained in the adult.

It is found in the cell membrane. It catalyses the reaction GTP = 3',5'-cyclic GMP + diphosphate. Its function is as follows. Guanylate cyclase involved in the production of the second messenger cGMP. Regulates chemotaxis responses toward Li(1-), Mg(2+), Cl(1-), Br(1)- and I(1-) salt ions and methionine in ASE right (ASER) sensory neuron. May regulate ASER neuronal activity such as axon sprouting and calcium responses to changes in salt concentrations. The protein is Receptor-type guanylate cyclase gcy-22 of Caenorhabditis elegans.